A 252-amino-acid chain; its full sequence is Protein BTG3 (252 aa).

A disordered region spans residues 138–162; it reads VTSDYHSGSSSSDEDTSKEVEVKPS.

This sequence belongs to the BTG family. Highly expressed in the brain.

Functionally, overexpression impairs serum-induced cell cycle progression from the G0/G1 to S phase. This Rattus norvegicus (Rat) protein is Protein BTG3.